A 160-amino-acid chain; its full sequence is tRNA (cytidine(34)-2'-O)-methyltransferase (160 aa).

Positions 78, 100, 122, and 130 each coordinate S-adenosyl-L-methionine.

Belongs to the class IV-like SAM-binding methyltransferase superfamily. RNA methyltransferase TrmH family. TrmL subfamily. In terms of assembly, homodimer.

The protein localises to the cytoplasm. The enzyme catalyses cytidine(34) in tRNA + S-adenosyl-L-methionine = 2'-O-methylcytidine(34) in tRNA + S-adenosyl-L-homocysteine + H(+). The catalysed reaction is 5-carboxymethylaminomethyluridine(34) in tRNA(Leu) + S-adenosyl-L-methionine = 5-carboxymethylaminomethyl-2'-O-methyluridine(34) in tRNA(Leu) + S-adenosyl-L-homocysteine + H(+). Methylates the ribose at the nucleotide 34 wobble position in the two leucyl isoacceptors tRNA(Leu)(CmAA) and tRNA(Leu)(cmnm5UmAA). Catalyzes the methyl transfer from S-adenosyl-L-methionine to the 2'-OH of the wobble nucleotide. The chain is tRNA (cytidine(34)-2'-O)-methyltransferase from Haemophilus influenzae (strain ATCC 51907 / DSM 11121 / KW20 / Rd).